A 208-amino-acid chain; its full sequence is Small ribosomal subunit protein uS4 (208 aa).

Residues 98 to 161 (RRLDNVIYRL…RKIPVIAEAQ (64 aa)) form the S4 RNA-binding domain.

This sequence belongs to the universal ribosomal protein uS4 family. In terms of assembly, part of the 30S ribosomal subunit. Contacts protein S5. The interaction surface between S4 and S5 is involved in control of translational fidelity.

One of the primary rRNA binding proteins, it binds directly to 16S rRNA where it nucleates assembly of the body of the 30S subunit. In terms of biological role, with S5 and S12 plays an important role in translational accuracy. The chain is Small ribosomal subunit protein uS4 from Nitratidesulfovibrio vulgaris (strain DSM 19637 / Miyazaki F) (Desulfovibrio vulgaris).